A 619-amino-acid chain; its full sequence is 1-deoxy-D-xylulose-5-phosphate synthase (619 aa).

Residues His-74 and Gly-115–Ser-117 each bind thiamine diphosphate. A Mg(2+)-binding site is contributed by Asp-146. Thiamine diphosphate is bound by residues Gly-147–Ala-148, Asn-175, Tyr-285, and Glu-365. Residue Asn-175 participates in Mg(2+) binding.

The protein belongs to the transketolase family. DXPS subfamily. As to quaternary structure, homodimer. Requires Mg(2+) as cofactor. It depends on thiamine diphosphate as a cofactor.

The enzyme catalyses D-glyceraldehyde 3-phosphate + pyruvate + H(+) = 1-deoxy-D-xylulose 5-phosphate + CO2. Its pathway is metabolic intermediate biosynthesis; 1-deoxy-D-xylulose 5-phosphate biosynthesis; 1-deoxy-D-xylulose 5-phosphate from D-glyceraldehyde 3-phosphate and pyruvate: step 1/1. Functionally, catalyzes the acyloin condensation reaction between C atoms 2 and 3 of pyruvate and glyceraldehyde 3-phosphate to yield 1-deoxy-D-xylulose-5-phosphate (DXP). The polypeptide is 1-deoxy-D-xylulose-5-phosphate synthase (Clostridium acetobutylicum (strain ATCC 824 / DSM 792 / JCM 1419 / IAM 19013 / LMG 5710 / NBRC 13948 / NRRL B-527 / VKM B-1787 / 2291 / W)).